Reading from the N-terminus, the 85-residue chain is Protein WIR1B (85 aa).

The Cytoplasmic segment spans residues 1 to 12; the sequence is MASHSAAGRRPT. A helical transmembrane segment spans residues 13-34; the sequence is ALVHIALFVAIAAVIINSSVCL. Topologically, residues 35 to 85 are extracellular; that stretch reads GAAVHDAATSGTGALDPNVPAVPTPGGAGQPYTGRGCRTVYGCKPPAGSQP.

It is found in the membrane. Functionally, associated with pathogen defense. The chain is Protein WIR1B (WIR1B) from Triticum aestivum (Wheat).